Here is a 930-residue protein sequence, read N- to C-terminus: MCETYSRWLLRVSVAQICQALGWDSVQVSACDLLTDVLQRYLQGLGRGCHRYCELYGRTDPILDDVGDAFKLMGVNLHELEDYIHNIEPVTFAHQIPSFPVSKNNVLQFPQPGSKDAEERKEYIPDYMPPIVSSQEEEEEEQVPTDGGTSAEAMQVPLEEEGDMEEDEAINDENYLSKRPLESPDAEEFPPMKRPKLSVSKGDALDGALEPREPLSSINTQKVPPMLSPVHVQDSTDLAPPSPEPPMLAPIAKSQVPTPKTLESKPPAPKTKSKTSSPGQKTKSPKTTPSPVVAGSPIRSPKTGSKEKKSPGRAKSPKSPKSPKAPVHVPPPPVKPETPSRTPLAALSDKIGKENIQVKQGQTPPEPVTKPNIENQTKKLPVVDKTIDDSIDAVIARACAEREPDPFEFSSGSESEGEIFTSPKRLSVSETTATTPKPSVSTNCSNKAGATPVPPSGGTSSSDISWTMDDSIDEVIRKANMGTPSNPPANFTYFSSPSASPPTPEPLLKVYEEKTKLASSVEVKKKLKKELKTKMKKKEKQKEKDKEKSKEKNKEKEKNKEKDKDKEGNKEAKFQWKELLKDDEHDPYKFKLKDFEDADTKVKLKDGNTKKEKEKHKDKKKEKEKGKKDKDKKDKEKVKDKSKEDKIKPPSAPLVLPPKEMSLPLFSTPTAMRLPSMLPSLSPMLPEKLFEDKEKPKEKKKDKKEKKKKKEREKDKEKEKKDKEKERKEREKKEKEKEKHKHEKIKVEPVVPAPSPVIPRLTLRVGAGQDKIVISKVVPAPEAKPATPVSRPKTPPPVPSPVPAPVHVTPPPAPVPAPPQPTVSPALLPPASPAVSAAGGSKAPVRSVVTETVSTYVIRDEWGNQIWFCPGCNKPDDGSPMIGCDDCDDWYHWPCVGITAAPPEEMQWFCSKCANKKKDKKHKKRKHRAH.

Disordered stretches follow at residues 128–151 (MPPIVSSQEEEEEEQVPTDGGTSA), 175–381 (YLSK…KKLP), 404–507 (PDPF…PEPL), 519–578 (SSVE…QWKE), 599–755 (DTKV…PAPS), and 782–820 (EAKPATPVSRPKTPPPVPSPVPAPVHVTPPPAPVPAPPQ). Over residues 274 to 291 (KTSSPGQKTKSPKTTPSP) the composition is skewed to low complexity. Residues 428–446 (VSETTATTPKPSVSTNCSN) are compositionally biased toward polar residues. Low complexity predominate over residues 448–462 (AGATPVPPSGGTSSS). A compositionally biased stretch (polar residues) spans 482-494 (GTPSNPPANFTYF). Over residues 525–539 (KKLKKELKTKMKKKE) the composition is skewed to basic residues. 3 stretches are compositionally biased toward basic and acidic residues: residues 540–578 (KQKEKDKEKSKEKNKEKEKNKEKDKDKEGNKEAKFQWKE), 599–612 (DTKVKLKDGNTKKE), and 621–648 (KEKEKGKKDKDKKDKEKVKDKSKEDKIK). Residues 674 to 686 (LPSMLPSLSPMLP) are compositionally biased toward low complexity. Basic and acidic residues predominate over residues 688-699 (KLFEDKEKPKEK). Residues 700 to 711 (KKDKKEKKKKKE) show a composition bias toward basic residues. A compositionally biased stretch (basic and acidic residues) spans 712-737 (REKDKEKEKKDKEKERKEREKKEKEK). The span at 793–820 (KTPPPVPSPVPAPVHVTPPPAPVPAPPQ) shows a compositional bias: pro residues. Residues 866 to 916 (IWFCPGCNKPDDGSPMIGCDDCDDWYHWPCVGITAAPPEEMQWFCSKCANK) form a PHD-type zinc finger.

The protein belongs to the TAF3 family. As to quaternary structure, component of the TFIID basal transcription factor complex, composed of TATA-box-binding protein TBP, and a number of TBP-associated factors (TAFs), including TAF1, TAF2, TAF3, TAF4, TAF5, TAF6, TAF7, TAF8, TAF9, TAF10, TAF11, TAF12 and TAF13. Interacts with TAF10 via the histone fold. Interacts with TAF13, TBP, SAP130 and GCN5L2. Interacts with TBPL2.

It is found in the nucleus. In terms of biological role, the TFIID basal transcription factor complex plays a major role in the initiation of RNA polymerase II (Pol II)-dependent transcription. TFIID recognizes and binds promoters with or without a TATA box via its subunit TBP, a TATA-box-binding protein, and promotes assembly of the pre-initiation complex (PIC). The TFIID complex consists of TBP and TBP-associated factors (TAFs), including TAF1, TAF2, TAF3, TAF4, TAF5, TAF6, TAF7, TAF8, TAF9, TAF10, TAF11, TAF12 and TAF13. The TFIID complex structure can be divided into 3 modules TFIID-A, TFIID-B, and TFIID-C. TAF3 forms the TFIID-A module together with TAF5 and TBP. Required in complex with TBPL2 for the differentiation of myoblasts into myocytes. The TAF3-TBPL2 complex replaces TFIID at specific promoters at an early stage in the differentiation process. The polypeptide is Transcription initiation factor TFIID subunit 3 (TAF3) (Gallus gallus (Chicken)).